The sequence spans 581 residues: Sulfate adenylyltransferase (581 aa).

The N-terminal stretch occupies residues 1–176 (MANAPHGGVL…VQAIQAPTHF (176 aa)). The catalytic stretch occupies residues 177-401 (DYVPLRFTPA…LRESYPPRPQ (225 aa)). Gln-204 is a binding site for sulfate. ATP-binding positions include 204–207 (QTRN) and 298–301 (GRDH). Catalysis depends on residues Thr-205, Arg-206, and Asn-207. Arg-206 is a binding site for sulfate. Residue Ala-302 participates in sulfate binding. Met-340 is a binding site for ATP. The interval 402 to 581 (QGFTILLTGL…IMILESQNLV (180 aa)) is allosteric regulation domain; adenylyl-sulfate kinase-like. 3'-phosphoadenylyl sulfate-binding positions include 441-444 (EELR), 486-487 (TA), and Arg-526.

In the N-terminal section; belongs to the sulfate adenylyltransferase family. This sequence in the C-terminal section; belongs to the APS kinase family. As to quaternary structure, homohexamer. Dimer of trimers.

Its subcellular location is the cytoplasm. The enzyme catalyses sulfate + ATP + H(+) = adenosine 5'-phosphosulfate + diphosphate. It functions in the pathway sulfur metabolism; hydrogen sulfide biosynthesis; sulfite from sulfate: step 1/3. With respect to regulation, allosterically inhibited by 3'-phosphoadenosine 5'-phosphosulfate (PAPS). In terms of biological role, catalyzes the first intracellular reaction of sulfate assimilation, forming adenosine-5'-phosphosulfate (APS) from inorganic sulfate and ATP. Plays an important role in sulfate activation as a component of the biosynthesis pathway of sulfur-containing amino acids. The sequence is that of Sulfate adenylyltransferase from Cryptococcus neoformans var. neoformans serotype D (strain B-3501A) (Filobasidiella neoformans).